The chain runs to 483 residues: MLLLMFALLQDGELRKAEILSIRQRKDGPSFYVHYVDFNKRLDEWIDASRLDLSHEVEWPQPEKPEKKKTGVGNKAPSKNAQKRARADSRDVSATPDLLTGKNVNVGKAQRPSKAGGKENRDGTPLSMPIVTAEAISTDGTPKAESDDVEMVDVSFTDGKSIKEEERALGLMSREEEIERLRTSGSMTQNPTEIHRVRNLNRLQMGKYDIEPWYFSPYPASFSDADIIYIDEFCLSYFDDKRAFERHRTKCTLVHPPGNEIYRDDYISFFEVDGRRQRTWCRNLCLLSKLFLDHKTLYYDVDPFLFYCMCTRDETGCHLVGYFSKEKDSAEGYNLACILTLPQYQRRGFGRLLISFSYELSKREGKLGSPEKPLSDLGLLGYRQYWRETLVEILMEPGRETVSENELALLTSMTEKDVHETLVVLNMLRYYKGNWVIVLTDYVVEQHKKRLEKEKLKGARKIDPARLQWKPPVFTASSRTWNW.

Residues 10-53 (QDGELRKAEILSIRQRKDGPSFYVHYVDFNKRLDEWIDASRLDL) form the Tudor-knot domain. Over residues 57 to 69 (VEWPQPEKPEKKK) the composition is skewed to basic and acidic residues. A disordered region spans residues 57–127 (VEWPQPEKPE…KENRDGTPLS (71 aa)). Residues 195–471 (HRVRNLNRLQ…IDPARLQWKP (277 aa)) form the MYST-type HAT domain. The C2HC MYST-type; degenerate zinc finger occupies 228-253 (IYIDEFCLSYFDDKRAFERHRTKCTL). Residues 278 to 299 (RTWCRNLCLLSKLFLDHKTLYY) carry the ESA1-RPD3 motif motif. K295 bears the N6-acetyllysine; by autocatalysis mark. Acetyl-CoA contacts are provided by residues 336-340 (ACILT) and 345-351 (QRRGFGR). The Proton donor/acceptor role is filled by E371. S375 is an acetyl-CoA binding site.

It belongs to the MYST (SAS/MOZ) family. Component of the NuA4 histone acetyltransferase complex. Autoacetylation at Lys-295 is required for proper function.

The protein resides in the nucleus. It localises to the chromosome. It catalyses the reaction L-lysyl-[histone] + acetyl-CoA = N(6)-acetyl-L-lysyl-[histone] + CoA + H(+). The catalysed reaction is L-lysyl-[protein] + acetyl-CoA = N(6)-acetyl-L-lysyl-[protein] + CoA + H(+). It carries out the reaction 2-hydroxyisobutanoyl-CoA + L-lysyl-[protein] = N(6)-(2-hydroxyisobutanoyl)-L-lysyl-[protein] + CoA + H(+). The enzyme catalyses (2E)-butenoyl-CoA + L-lysyl-[protein] = N(6)-(2E)-butenoyl-L-lysyl-[protein] + CoA + H(+). Catalytic component of the NuA4 histone acetyltransferase (HAT) complex which is involved in epigenetic transcriptional activation of selected genes principally by acetylation of nucleosomal histones H4, H3, H2B, H2A and H2A variant H2A.Z. Acetylates histone H4 to form H4K5ac, H4K8ac, H4K12ac and H4K16ac, histone H3 to form H3K14ac, and histone H2A to form H2AK4ac and H2AK7ac. The NuA4 complex is involved in the DNA damage response and is required for chromosome segregation. The NuA4 complex plays a direct role in repair of DNA double-strand breaks (DSBs) through homologous recombination. Recruitment to promoters depends on H3K4me. Also acetylates non-histone proteins. In addition to protein acetyltransferase, can use different acyl-CoA substrates, such as 2-hydroxyisobutanoyl-CoA (2-hydroxyisobutyryl-CoA) or (2E)-butenoyl-CoA (crotonyl-CoA), and is able to mediate protein 2-hydroxyisobutyrylation and crotonylation, respectively. This is Histone acetyltransferase esa1 (esa1) from Aspergillus fumigatus (strain ATCC MYA-4609 / CBS 101355 / FGSC A1100 / Af293) (Neosartorya fumigata).